Consider the following 86-residue polypeptide: MSESSDISAMQPVNPKPFLKGLVNHRVGVKLKFNSTEYRGTLVSTDNYFNLQLNEAEEFVAGVSHGTLGEIFIRCNNVLYIRELPN.

One can recognise a Sm domain in the interval 14–86 (NPKPFLKGLV…NVLYIRELPN (73 aa)).

It belongs to the snRNP Sm proteins family. SmF/LSm6 subfamily. Component of the Sm core complex, present in spliceosomal snRNP U1, U2, U4/U6 and U5. The core complex contains SMB1, SMD1, SMD2, SMD3, SME1, SMX3 and SMX2 (Sm proteins B, D1, D2, D3, E, F and G, respectively), and is probably a heptameric ring structure. SMX3 specifically interacts with SME1. Belongs to the CWC complex (or CEF1-associated complex), a spliceosome sub-complex reminiscent of a late-stage spliceosome composed of the U2, U5 and U6 snRNAs and at least BUD13, BUD31, BRR2, CDC40, CEF1, CLF1, CUS1, CWC2, CWC15, CWC21, CWC22, CWC23, CWC24, CWC25, CWC27, ECM2, HSH155, IST3, ISY1, LEA1, MSL1, NTC20, PRP8, PRP9, PRP11, PRP19, PRP21, PRP22, PRP45, PRP46, SLU7, SMB1, SMD1, SMD2, SMD3, SMX2, SMX3, SNT309, SNU114, SPP2, SYF1, SYF2, RSE1 and YJU2. Component of the U4/U6-U5 tri-snRNP complex composed of the U4, U6 and U5 snRNAs and at least PRP3, PRP4, PRP6, PRP8, PRP18, PRP31, PRP38, SNU13, SNU23, SNU66, SNU114, SPP381, SMB1, SMD1, SMD2, SMD3, SMX2, SMX3, LSM2, LSM3, LSM4, LSM5, LSM6, LSM7, LSM8, BRR2 and DIB1.

The protein localises to the nucleus. It localises to the cytoplasm. In terms of biological role, plays a role in pre-mRNA splicing as a core component of the spliceosomal U1, U2, U4 and U5 small nuclear ribonucleoproteins (snRNPs), the building blocks of the spliceosome. The protein is Small nuclear ribonucleoprotein F (SMX3) of Saccharomyces cerevisiae (strain ATCC 204508 / S288c) (Baker's yeast).